We begin with the raw amino-acid sequence, 613 residues long: Dihydroxy-acid dehydratase (613 aa).

Asp-81 serves as a coordination point for Mg(2+). Cys-122 is a binding site for [2Fe-2S] cluster. Residues Asp-123 and Lys-124 each contribute to the Mg(2+) site. Lys-124 is subject to N6-carboxylysine. Residue Cys-195 coordinates [2Fe-2S] cluster. Glu-491 is a binding site for Mg(2+). The active-site Proton acceptor is the Ser-517.

Belongs to the IlvD/Edd family. In terms of assembly, homodimer. [2Fe-2S] cluster serves as cofactor. It depends on Mg(2+) as a cofactor.

It carries out the reaction (2R)-2,3-dihydroxy-3-methylbutanoate = 3-methyl-2-oxobutanoate + H2O. It catalyses the reaction (2R,3R)-2,3-dihydroxy-3-methylpentanoate = (S)-3-methyl-2-oxopentanoate + H2O. The protein operates within amino-acid biosynthesis; L-isoleucine biosynthesis; L-isoleucine from 2-oxobutanoate: step 3/4. It participates in amino-acid biosynthesis; L-valine biosynthesis; L-valine from pyruvate: step 3/4. Functionally, functions in the biosynthesis of branched-chain amino acids. Catalyzes the dehydration of (2R,3R)-2,3-dihydroxy-3-methylpentanoate (2,3-dihydroxy-3-methylvalerate) into 2-oxo-3-methylpentanoate (2-oxo-3-methylvalerate) and of (2R)-2,3-dihydroxy-3-methylbutanoate (2,3-dihydroxyisovalerate) into 2-oxo-3-methylbutanoate (2-oxoisovalerate), the penultimate precursor to L-isoleucine and L-valine, respectively. In Vibrio cholerae serotype O1 (strain ATCC 39541 / Classical Ogawa 395 / O395), this protein is Dihydroxy-acid dehydratase.